The sequence spans 54 residues: Ovomucoid (54 aa).

The Kazal-like domain maps to 4-54 (VDCSDYPTHGCTLELKPICGSDNQTYSNKCGFCNAVAQSNGTLTLSHFGKC). 3 disulfide bridges follow: C6–C36, C14–C33, and C22–C54. N-linked (GlcNAc...) asparagine glycosylation is present at N43.

The protein resides in the secreted. The protein is Ovomucoid of Aepypodius arfakianus (Wattled brush turkey).